A 437-amino-acid chain; its full sequence is Cytochrome c biogenesis protein Ccs1 (437 aa).

A run of 3 helical transmembrane segments spans residues 23 to 43, 82 to 102, and 168 to 188; these read LQFS…GTII, TWWF…CSLS, and LAPI…VLGL.

Belongs to the Ccs1/CcsB family. May interact with CcsA.

It localises to the plastid. Its subcellular location is the chloroplast thylakoid membrane. Functionally, required during biogenesis of c-type cytochromes (cytochrome c6 and cytochrome f) at the step of heme attachment. This is Cytochrome c biogenesis protein Ccs1 from Porphyra purpurea (Red seaweed).